The sequence spans 416 residues: Gamma-glutamyl phosphate reductase (416 aa).

This sequence belongs to the gamma-glutamyl phosphate reductase family.

It is found in the cytoplasm. The catalysed reaction is L-glutamate 5-semialdehyde + phosphate + NADP(+) = L-glutamyl 5-phosphate + NADPH + H(+). The protein operates within amino-acid biosynthesis; L-proline biosynthesis; L-glutamate 5-semialdehyde from L-glutamate: step 2/2. Functionally, catalyzes the NADPH-dependent reduction of L-glutamate 5-phosphate into L-glutamate 5-semialdehyde and phosphate. The product spontaneously undergoes cyclization to form 1-pyrroline-5-carboxylate. This Salmonella paratyphi A (strain AKU_12601) protein is Gamma-glutamyl phosphate reductase.